The sequence spans 833 residues: DNA gyrase subunit A (833 aa).

Residues 35–498 (LPDVRDGMKP…SEDMFEDEDL (464 aa)) enclose the Topo IIA-type catalytic domain. Tyrosine 123 serves as the catalytic O-(5'-phospho-DNA)-tyrosine intermediate. The GyrA-box signature appears at 525–531 (QKRGGRG). Residues 803–833 (RVDIEDDELDEDESIEEERDDRSEVEQGENE) are disordered. The segment covering 806–821 (IEDDELDEDESIEEER) has biased composition (acidic residues).

It belongs to the type II topoisomerase GyrA/ParC subunit family. In terms of assembly, heterotetramer, composed of two GyrA and two GyrB chains. In the heterotetramer, GyrA contains the active site tyrosine that forms a transient covalent intermediate with DNA, while GyrB binds cofactors and catalyzes ATP hydrolysis.

Its subcellular location is the cytoplasm. The catalysed reaction is ATP-dependent breakage, passage and rejoining of double-stranded DNA.. Its function is as follows. A type II topoisomerase that negatively supercoils closed circular double-stranded (ds) DNA in an ATP-dependent manner to modulate DNA topology and maintain chromosomes in an underwound state. Negative supercoiling favors strand separation, and DNA replication, transcription, recombination and repair, all of which involve strand separation. Also able to catalyze the interconversion of other topological isomers of dsDNA rings, including catenanes and knotted rings. Type II topoisomerases break and join 2 DNA strands simultaneously in an ATP-dependent manner. The sequence is that of DNA gyrase subunit A from Halalkalibacterium halodurans (strain ATCC BAA-125 / DSM 18197 / FERM 7344 / JCM 9153 / C-125) (Bacillus halodurans).